The chain runs to 355 residues: Uroporphyrinogen decarboxylase (355 aa).

Substrate is bound by residues 27–31 (RQAGR), Asp77, Tyr154, Thr209, and His328.

It belongs to the uroporphyrinogen decarboxylase family. In terms of assembly, homodimer.

It localises to the cytoplasm. The catalysed reaction is uroporphyrinogen III + 4 H(+) = coproporphyrinogen III + 4 CO2. It participates in porphyrin-containing compound metabolism; protoporphyrin-IX biosynthesis; coproporphyrinogen-III from 5-aminolevulinate: step 4/4. In terms of biological role, catalyzes the decarboxylation of four acetate groups of uroporphyrinogen-III to yield coproporphyrinogen-III. In Dechloromonas aromatica (strain RCB), this protein is Uroporphyrinogen decarboxylase.